The following is a 117-amino-acid chain: UPF0122 protein Cthe_0771 (117 aa).

This sequence belongs to the UPF0122 family.

In terms of biological role, might take part in the signal recognition particle (SRP) pathway. This is inferred from the conservation of its genetic proximity to ftsY/ffh. May be a regulatory protein. The sequence is that of UPF0122 protein Cthe_0771 from Acetivibrio thermocellus (strain ATCC 27405 / DSM 1237 / JCM 9322 / NBRC 103400 / NCIMB 10682 / NRRL B-4536 / VPI 7372) (Clostridium thermocellum).